A 234-amino-acid polypeptide reads, in one-letter code: NAD-reducing hydrogenase HoxS subunit gamma (234 aa).

Residues 2–77 (SIQITIDGKT…GLNVEVNDPE (76 aa)) form the 2Fe-2S ferredoxin-type domain. Positions 35, 46, 49, and 61 each coordinate [2Fe-2S] cluster. The 4Fe-4S His(Cys)3-ligated-type domain maps to 77 to 116 (ELVDMRKALVEFLFAEGNHNCPSCEKSGRCQLQAVGYEVD). [4Fe-4S] cluster contacts are provided by histidine 95, cysteine 97, cysteine 100, cysteine 106, cysteine 145, cysteine 148, cysteine 151, and cysteine 198.

Belongs to the complex I 75 kDa subunit family. Tetramer of an alpha and a gamma subunits (flavin-containing dimer), and a delta and a nickel-containing beta subunits (hydrogenase dimer). Requires [2Fe-2S] cluster as cofactor. [4Fe-4S] cluster serves as cofactor.

It is found in the cytoplasm. The enzyme catalyses H2 + NAD(+) = NADH + H(+). Functionally, subunits alpha and gamma of HoxS constitute an NADH--oxidoreductase. The polypeptide is NAD-reducing hydrogenase HoxS subunit gamma (hoxU) (Cupriavidus necator (strain ATCC 17699 / DSM 428 / KCTC 22496 / NCIMB 10442 / H16 / Stanier 337) (Ralstonia eutropha)).